A 397-amino-acid polypeptide reads, in one-letter code: tRNA pseudouridine synthase D (397 aa).

The active-site Nucleophile is D76. The TRUD domain maps to 151-361; sequence GVPNFFGEQR…MEGERRPLRV (211 aa).

It belongs to the pseudouridine synthase TruD family.

The enzyme catalyses uridine(13) in tRNA = pseudouridine(13) in tRNA. Its function is as follows. Responsible for synthesis of pseudouridine from uracil-13 in transfer RNAs. This is tRNA pseudouridine synthase D from Geotalea daltonii (strain DSM 22248 / JCM 15807 / FRC-32) (Geobacter daltonii).